A 259-amino-acid polypeptide reads, in one-letter code: DNA-directed RNA polymerase subunit Rpo3 (259 aa).

It belongs to the archaeal Rpo3/eukaryotic RPB3 RNA polymerase subunit family. As to quaternary structure, part of the RNA polymerase complex.

Its subcellular location is the cytoplasm. The catalysed reaction is RNA(n) + a ribonucleoside 5'-triphosphate = RNA(n+1) + diphosphate. DNA-dependent RNA polymerase (RNAP) catalyzes the transcription of DNA into RNA using the four ribonucleoside triphosphates as substrates. The polypeptide is DNA-directed RNA polymerase subunit Rpo3 (Thermococcus kodakarensis (strain ATCC BAA-918 / JCM 12380 / KOD1) (Pyrococcus kodakaraensis (strain KOD1))).